We begin with the raw amino-acid sequence, 364 residues long: Nicotinate-nucleotide--dimethylbenzimidazole phosphoribosyltransferase (364 aa).

The Proton acceptor role is filled by Glu332.

The protein belongs to the CobT family.

It catalyses the reaction 5,6-dimethylbenzimidazole + nicotinate beta-D-ribonucleotide = alpha-ribazole 5'-phosphate + nicotinate + H(+). The protein operates within nucleoside biosynthesis; alpha-ribazole biosynthesis; alpha-ribazole from 5,6-dimethylbenzimidazole: step 1/2. Its function is as follows. Catalyzes the synthesis of alpha-ribazole-5'-phosphate from nicotinate mononucleotide (NAMN) and 5,6-dimethylbenzimidazole (DMB). In Salinispora tropica (strain ATCC BAA-916 / DSM 44818 / JCM 13857 / NBRC 105044 / CNB-440), this protein is Nicotinate-nucleotide--dimethylbenzimidazole phosphoribosyltransferase.